Consider the following 835-residue polypeptide: Ubiquitin carboxyl-terminal hydrolase 26 (835 aa).

The interval 102 to 128 (SQGSIRPARSDERCGEPSTSAQELNGS) is disordered. Polar residues predominate over residues 118 to 128 (PSTSAQELNGS). Residues 286–816 (QGLPNVGNTC…TGYVFFYMHN (531 aa)) form the USP domain. Cysteine 295 (nucleophile) is an active-site residue. The tract at residues 597-747 (NRESEAQSGK…TRKVDPTKLN (151 aa)) is disordered. Basic and acidic residues-rich tracts occupy residues 634 to 652 (LTKETEKLKKHEEEHRPSD) and 669 to 679 (KCNEGRSDKQI). The segment covering 683–708 (ALTQSRPKPISQEQTENLGKTTLSHT) has biased composition (polar residues). Low complexity predominate over residues 709–725 (QDSSQSSQSSSDSSKSS). The segment covering 726-747 (RCSDDLDKKAKPTRKVDPTKLN) has biased composition (basic and acidic residues). Catalysis depends on histidine 771, which acts as the Proton acceptor.

The protein belongs to the peptidase C19 family. In terms of assembly, interacts with RING1.

It is found in the nucleus. Its subcellular location is the cytoplasm. It localises to the cytoskeleton. The protein resides in the flagellum axoneme. It carries out the reaction Thiol-dependent hydrolysis of ester, thioester, amide, peptide and isopeptide bonds formed by the C-terminal Gly of ubiquitin (a 76-residue protein attached to proteins as an intracellular targeting signal).. Functionally, deubiquitinase regulating several biological processes through the deubiquitination of components of these processes. Involved in somatic cell reprogramming through the 'Lys-48'-linked deubiquitination and stabilization of CBX4 and CBX6, two components of the polycomb-repressive complex 1 (PRC1). Also deubiquitinates and probably stabilizes the androgen receptor (AR), regulating the androgen receptor signaling pathway. May play a role in spermatogenesis. The sequence is that of Ubiquitin carboxyl-terminal hydrolase 26 from Mus musculus (Mouse).